The sequence spans 136 residues: Ribonuclease P protein component (136 aa).

The tract at residues 39–59 (LPDVSSSKPARDTGAEQTSAP) is disordered.

This sequence belongs to the RnpA family. Consists of a catalytic RNA component (M1 or rnpB) and a protein subunit.

The catalysed reaction is Endonucleolytic cleavage of RNA, removing 5'-extranucleotides from tRNA precursor.. Functionally, RNaseP catalyzes the removal of the 5'-leader sequence from pre-tRNA to produce the mature 5'-terminus. It can also cleave other RNA substrates such as 4.5S RNA. The protein component plays an auxiliary but essential role in vivo by binding to the 5'-leader sequence and broadening the substrate specificity of the ribozyme. The protein is Ribonuclease P protein component of Salinispora tropica (strain ATCC BAA-916 / DSM 44818 / JCM 13857 / NBRC 105044 / CNB-440).